We begin with the raw amino-acid sequence, 467 residues long: UPF0236 protein TTE0033/TTE0744/TTE0838/TTE0852/TTE1082/TTE1247/TTE1519/TTE1678/TTE1739/TTE1823/TTE2212 (467 aa).

It belongs to the UPF0236 family.

The sequence is that of UPF0236 protein TTE0033/TTE0744/TTE0838/TTE0852/TTE1082/TTE1247/TTE1519/TTE1678/TTE1739/TTE1823/TTE2212 from Caldanaerobacter subterraneus subsp. tengcongensis (strain DSM 15242 / JCM 11007 / NBRC 100824 / MB4) (Thermoanaerobacter tengcongensis).